The following is a 109-amino-acid chain: Acylphosphatase (109 aa).

In terms of domain architecture, Acylphosphatase-like spans 22 to 109 (RLRARVEGVV…GEFSSFDVVY (88 aa)). Residues Arg37 and Asn55 contribute to the active site.

The protein belongs to the acylphosphatase family.

It catalyses the reaction an acyl phosphate + H2O = a carboxylate + phosphate + H(+). In Arthrobacter sp. (strain FB24), this protein is Acylphosphatase (acyP).